The chain runs to 720 residues: MELFSDSGSIVENFKERINKLVFDYSLNHGGFRKTYKIQRDRVYYMLGDAHHANLSGKCLMLYNSEKDIFEGLGFKVKGSRINVSKTQILRNYEINFETIIGVEPNGLKTISTAKDVKKLYDIYSYKSSLHPFDDFMAHCINRWGMSIPASLERIIKSEIIKVRSGVLNRNSELYNYIPTVDASFSEMSRGPANVILTDGKLVPDGTCFGPILSKSVEDPRLKNEFRSKGLIMVHDYFILIGESPGPHYKKYTKMTKDNTIFWDPRRTDHKFNNVVSYFKKENIRDVVEYTTDALNRGLKPLVLIDIRKDKPKNLNTPEGAIEWERMVHDDNNLIIDMVNALDKRVTVCAKLRPAFMQVGSMRKLLRPVRILPLPYLRRSTAEFNMFVPNEALMNGNEIYDVTYDDLVRMSSEVFVLKNIIGGLYNMYLKDMHLNLGVVNKSVSLSDGSSAIWSLSNINNERISNFNFNNFLYAAPYSDFATSSVKRHFKGRNYSDWCLNILDEVNLKDGVYLVPLYAIVGGGQITSHDFVNAIITDQEQLIDFTQSERALSTQVVKLVSFILKDSFTAKGLNWTEIDNEIRNRRLSSLSGVGFTVTKMLDGKVLVDGKVVTVSGHMLYILLGSILGLPYGIKKYLKEIELNILKPGSSYERGVGGRVWHGLISHYLAVDCVIDVIDEYMVCTYEDRSKLNVVLRYVKSKLLELGSKYDVYLSVDERLVL.

The protein localises to the virion. The enzyme catalyses a 5'-end diphospho-ribonucleoside in mRNA + GTP + H(+) = a 5'-end (5'-triphosphoguanosine)-ribonucleoside in mRNA + diphosphate. The catalysed reaction is a 5'-end (5'-triphosphoguanosine)-ribonucleoside in mRNA + S-adenosyl-L-methionine = a 5'-end (N(7)-methyl 5'-triphosphoguanosine)-ribonucleoside in mRNA + S-adenosyl-L-homocysteine. In terms of biological role, outer capsid protein involved in mRNA capping. Catalyzes the last 3 enzymatic activities for formation of the 5' cap structure on the viral plus-strand transcripts, namely the RNA guanylyltransferase, RNA-7N- and RNA-2'O-methyltransferase activities. The protein is Viral guanylyltransferase VP3 (Segment-3) of Banna virus (BAV).